The sequence spans 321 residues: Phospholipid phosphatase-related protein type 5 (321 aa).

Transmembrane regions (helical) follow at residues 10 to 30 (SSML…AYYF), 62 to 82 (AVPP…VIIV), 122 to 142 (FLGI…AGQV), 196 to 213 (AALS…ITNT), 225 to 245 (VLCL…VAEY), and 252 to 272 (VIAG…CVVN).

Belongs to the PA-phosphatase related phosphoesterase family. As to expression, isoform 1 is expressed in brain, lung, kidney and colon. Isoform 2 is expressed in placenta, skeletal muscle and kidney.

It is found in the cell membrane. Induces filopodia formation and promotes neurite growth in a CDC42-independent manner; impedes neurite growth inhibitory-mediated axonal retraction. This Homo sapiens (Human) protein is Phospholipid phosphatase-related protein type 5.